We begin with the raw amino-acid sequence, 158 residues long: Low molecular weight phosphotyrosine protein phosphatase (158 aa).

Ala-2 carries the N-acetylalanine modification. Cys-13 functions as the Nucleophile in the catalytic mechanism. The active site involves Arg-19. The active-site Proton donor is Asp-130. A phosphotyrosine mark is found at Tyr-132 and Tyr-133.

It belongs to the low molecular weight phosphotyrosine protein phosphatase family. As to quaternary structure, interacts with EPHA2; dephosphorylates EPHA2. Interacts with EPHB1. Interacts with the SH3 domain of SPTAN1. Phosphorylated by LCK. Phosphorylation at Tyr-132 increases its phosphatase activity.

It is found in the cytoplasm. The enzyme catalyses O-phospho-L-tyrosyl-[protein] + H2O = L-tyrosyl-[protein] + phosphate. It catalyses the reaction a phosphate monoester + H2O = an alcohol + phosphate. Its activity is regulated as follows. Inhibited by sulfhydryl reagents. In terms of biological role, acts on tyrosine phosphorylated proteins, low-MW aryl phosphates and natural and synthetic acyl phosphates with differences in substrate specificity between isoform 1 and isoform 2. The sequence is that of Low molecular weight phosphotyrosine protein phosphatase (ACP1) from Pongo abelii (Sumatran orangutan).